The chain runs to 408 residues: MASRSLGGLSGSRGGGGGGGGKKSLSARNAAVERRNLITVCRFSVKTLIDRSCFETIDDSSPEFNNFAAVLEQILSHRLKGQVTWFGYESPRSFWDYIRVACRKVSQNCICSIENMENVSSSRAKGRAWIRVALMEKHLSEYISTALRDFKTTRRFYEDGAIVLGEEANMLAGMLLGLNAIDFSFCLKGEGLDGTFPAVIDYTPYLKFEQSSDSISSDEEELRTFGSSDSESSTPENVGPPLILDENTWFNKCKRVRQKYQLTLEQKGYLEELLRLRENQLSESVSQNKILLQRIEDSDLAHKLEKEQLEYIIVELQDQLKSYQSLDQLSAEVSLSQASLDPSHSQEGDGKQDSLNFIGEGKEDTPSLLGLCGSLTSVASYKSLTSLKSNDCLASPTTELTSPGLTPS.

The segment at 1–25 (MASRSLGGLSGSRGGGGGGGGKKSL) is disordered. The segment covering 8 to 22 (GLSGSRGGGGGGGGK) has biased composition (gly residues). Arg13 is modified (omega-N-methylarginine). The 133-residue stretch at 58–190 (DDSSPEFNNF…IDFSFCLKGE (133 aa)) folds into the RUN domain. Residues 213–238 (DSISSDEEELRTFGSSDSESSTPENV) form a disordered region. A phosphoserine mark is found at Ser216 and Ser217. The segment covering 225–236 (FGSSDSESSTPE) has biased composition (polar residues). Positions 301 to 326 (AHKLEKEQLEYIIVELQDQLKSYQSL) form a coiled coil. The disordered stretch occupies residues 337-359 (QASLDPSHSQEGDGKQDSLNFIG).

It belongs to the RUNDC3 family. In terms of assembly, interacts with RAP2A.

This is RUN domain-containing protein 3B (Rundc3b) from Mus musculus (Mouse).